Here is a 1314-residue protein sequence, read N- to C-terminus: E3 ubiquitin-protein ligase RNF123 (1314 aa).

Ala2 bears the N-acetylalanine mark. A B30.2/SPRY domain is found at 74–254; that stretch reads VDSEDNESQG…VAFNFGSRPL (181 aa). The disordered stretch occupies residues 460–483; that stretch reads HRSSRESRDGKEAREETTEERQRR. The span at 462–483 shows a compositional bias: basic and acidic residues; that stretch reads SSRESRDGKEAREETTEERQRR. Ser675 is modified (phosphoserine). At Arg683 the chain carries Asymmetric dimethylarginine. Positions 968-974 are interaction with NFKB1; the sequence is WILVRLW. Zn(2+) is bound by residues Cys1254, Cys1257, Cys1269, His1271, Cys1274, Cys1277, Cys1288, and Cys1291. An RING-type zinc finger spans residues 1254–1292; it reads CPICYAHPISAVFQPCGHKSCKACINQHLMNNKDCFFCK.

Component of the KPC complex composed of RNF123/KPC1 and UBAC1/KPC2. Interacts with UBAC1 and CDKN1B via its N-terminal domain. Interacts with RIGI (via N-terminus) and IFIH1 (via N-terminus). Post-translationally, ubiquitinated, leading to its degradation. Deubiquitinated by USP19, thereby stimulating CDKN1B ubiquitin-dependent degradation.

The protein resides in the cytoplasm. The enzyme catalyses S-ubiquitinyl-[E2 ubiquitin-conjugating enzyme]-L-cysteine + [acceptor protein]-L-lysine = [E2 ubiquitin-conjugating enzyme]-L-cysteine + N(6)-ubiquitinyl-[acceptor protein]-L-lysine.. It participates in protein modification; protein ubiquitination. In terms of biological role, catalytic subunit of the KPC complex that acts as E3 ubiquitin-protein ligase. Promotes the ubiquitination and proteasome-mediated degradation of CDKN1B which is the cyclin-dependent kinase inhibitor at the G0-G1 transition of the cell cycle. Also acts as a key regulator of the NF-kappa-B signaling by promoting maturation of the NFKB1 component of NF-kappa-B: acts by catalyzing ubiquitination of the NFKB1 p105 precursor, leading to limited proteasomal degradation of NFKB1 p105 and generation of the active NFKB1 p50 subunit. Functions also as an inhibitor of innate antiviral signaling mediated by RIGI and IFIH1 independently of its E3 ligase activity. Interacts with the N-terminal CARD domains of RIGI and IFIH1 and competes with the downstream adapter MAVS. This chain is E3 ubiquitin-protein ligase RNF123 (Rnf123), found in Mus musculus (Mouse).